The following is a 176-amino-acid chain: NAD(P)H-quinone oxidoreductase subunit 6, chloroplastic (176 aa).

Transmembrane regions (helical) follow at residues 10 to 30 (FLLV…VLLP), 32 to 52 (PIYS…FYIL), 61 to 81 (AQLL…VMFM), 92 to 112 (LWTV…ISLI), and 152 to 172 (FFLP…GAIA).

Belongs to the complex I subunit 6 family. As to quaternary structure, NDH is composed of at least 16 different subunits, 5 of which are encoded in the nucleus.

It is found in the plastid. The protein localises to the chloroplast thylakoid membrane. It carries out the reaction a plastoquinone + NADH + (n+1) H(+)(in) = a plastoquinol + NAD(+) + n H(+)(out). The catalysed reaction is a plastoquinone + NADPH + (n+1) H(+)(in) = a plastoquinol + NADP(+) + n H(+)(out). In terms of biological role, NDH shuttles electrons from NAD(P)H:plastoquinone, via FMN and iron-sulfur (Fe-S) centers, to quinones in the photosynthetic chain and possibly in a chloroplast respiratory chain. The immediate electron acceptor for the enzyme in this species is believed to be plastoquinone. Couples the redox reaction to proton translocation, and thus conserves the redox energy in a proton gradient. This chain is NAD(P)H-quinone oxidoreductase subunit 6, chloroplastic (ndhG), found in Nicotiana tabacum (Common tobacco).